Consider the following 260-residue polypeptide: UPF0294 protein YPO1077/y3099/YP_2772 (260 aa).

Belongs to the UPF0294 family.

It localises to the cytoplasm. The protein is UPF0294 protein YPO1077/y3099/YP_2772 of Yersinia pestis.